Reading from the N-terminus, the 194-residue chain is NADH-quinone oxidoreductase subunit B (194 aa).

4 residues coordinate [4Fe-4S] cluster: cysteine 73, cysteine 74, cysteine 138, and cysteine 168.

It belongs to the complex I 20 kDa subunit family. NDH-1 is composed of 14 different subunits. Subunits NuoB, C, D, E, F, and G constitute the peripheral sector of the complex. Requires [4Fe-4S] cluster as cofactor.

The protein localises to the cell inner membrane. It catalyses the reaction a quinone + NADH + 5 H(+)(in) = a quinol + NAD(+) + 4 H(+)(out). NDH-1 shuttles electrons from NADH, via FMN and iron-sulfur (Fe-S) centers, to quinones in the respiratory chain. The immediate electron acceptor for the enzyme in this species is believed to be ubiquinone. Couples the redox reaction to proton translocation (for every two electrons transferred, four hydrogen ions are translocated across the cytoplasmic membrane), and thus conserves the redox energy in a proton gradient. The protein is NADH-quinone oxidoreductase subunit B of Rhizobium leguminosarum bv. trifolii (strain WSM2304).